The chain runs to 82 residues: Sec-independent protein translocase protein TatA (82 aa).

Residues 1-21 (MGSLSIWHWLIVGAVVLLVFG) form a helical membrane-spanning segment. The disordered stretch occupies residues 43-82 (GLSEDEEKAEAKPVGEPSLRSLDHQGAGDPLKTPDARKIG).

Belongs to the TatA/E family. As to quaternary structure, the Tat system comprises two distinct complexes: a TatABC complex, containing multiple copies of TatA, TatB and TatC subunits, and a separate TatA complex, containing only TatA subunits. Substrates initially bind to the TatABC complex, which probably triggers association of the separate TatA complex to form the active translocon.

Its subcellular location is the cell inner membrane. Functionally, part of the twin-arginine translocation (Tat) system that transports large folded proteins containing a characteristic twin-arginine motif in their signal peptide across membranes. TatA could form the protein-conducting channel of the Tat system. This Methylocella silvestris (strain DSM 15510 / CIP 108128 / LMG 27833 / NCIMB 13906 / BL2) protein is Sec-independent protein translocase protein TatA.